A 164-amino-acid chain; its full sequence is ATP synthase subunit b (164 aa).

The chain crosses the membrane as a helical span at residues 4 to 24; the sequence is IHFDLTLVVQVLSFLLLVYIL.

This sequence belongs to the ATPase B chain family. As to quaternary structure, F-type ATPases have 2 components, F(1) - the catalytic core - and F(0) - the membrane proton channel. F(1) has five subunits: alpha(3), beta(3), gamma(1), delta(1), epsilon(1). F(0) has three main subunits: a(1), b(2) and c(10-14). The alpha and beta chains form an alternating ring which encloses part of the gamma chain. F(1) is attached to F(0) by a central stalk formed by the gamma and epsilon chains, while a peripheral stalk is formed by the delta and b chains.

It localises to the cell membrane. F(1)F(0) ATP synthase produces ATP from ADP in the presence of a proton or sodium gradient. F-type ATPases consist of two structural domains, F(1) containing the extramembraneous catalytic core and F(0) containing the membrane proton channel, linked together by a central stalk and a peripheral stalk. During catalysis, ATP synthesis in the catalytic domain of F(1) is coupled via a rotary mechanism of the central stalk subunits to proton translocation. Functionally, component of the F(0) channel, it forms part of the peripheral stalk, linking F(1) to F(0). The polypeptide is ATP synthase subunit b (Desulfitobacterium hafniense (strain Y51)).